The sequence spans 355 residues: uncharacterized protein (355 aa).

Helical transmembrane passes span 275-295 (SLIV…FVAF), 301-321 (WNSI…VVGV), and 330-350 (IAST…PLAL).

It to M.tuberculosis Rv0497.

It localises to the cell membrane. This is an uncharacterized protein from Mycobacterium leprae (strain TN).